Here is a 558-residue protein sequence, read N- to C-terminus: SPATS2-like protein (558 aa).

A2 bears the N-acetylalanine mark. Over residues 63 to 79 (GKKKNNKRKRSKSKQHQ) the composition is skewed to basic residues. Disordered regions lie at residues 63 to 134 (GKKK…EKKI) and 157 to 201 (KLSL…KSNT). Positions 80-92 (GNKDAKDKVERPE) are enriched in basic and acidic residues. The residue at position 120 (S120) is a Phosphoserine. Residues 271-344 (LMAEMDKVKE…ARFSCDIEQL (74 aa)) are a coiled coil. The segment at 380–525 (TSGKQSNFSR…DTSEARPFRG (146 aa)) is disordered. 3 stretches are compositionally biased toward polar residues: residues 381 to 390 (SGKQSNFSRK), 410 to 432 (SLPS…GSSN), and 440 to 456 (QYHN…QGSG). At S455 the chain carries Phosphoserine. The span at 469 to 485 (HEHRRQPHNGFRPKNKG) shows a compositional bias: basic residues. Basic and acidic residues predominate over residues 513–522 (HAADTSEARP).

It belongs to the SPATS2 family.

It localises to the cytoplasm. The protein resides in the nucleus. Its subcellular location is the nucleolus. The chain is SPATS2-like protein (SPATS2L) from Homo sapiens (Human).